The sequence spans 840 residues: Translation initiation factor IF-2 (840 aa).

The segment at 1–251 (MTEEKKFSSS…GPAVPATERK (251 aa)) is disordered. Polar residues-rich tracts occupy residues 38–50 (DGTN…TPRS) and 65–83 (NRHT…ASRP). Over residues 84–102 (NQSKSQGQGGRNNQRPGSR) the composition is skewed to low complexity. Basic and acidic residues-rich tracts occupy residues 110-135 (PMIR…KTDN) and 158-168 (KPAEQSKKAAE). Residues 169-207 (KPAQTKPKTAETKTTATTTQSGTGKFGGALASGNNSARN) show a composition bias toward low complexity. A compositionally biased stretch (basic residues) spans 230 to 239 (GSKKSRRIAA). The 170-residue stretch at 341-510 (ARPPVVTIMG…LLQAEVLELK (170 aa)) folds into the tr-type G domain. The interval 350–357 (GHVDHGKT) is G1. Residue 350 to 357 (GHVDHGKT) coordinates GTP. The interval 375–379 (GITQH) is G2. The tract at residues 396 to 399 (DTPG) is G3. GTP-binding positions include 396-400 (DTPGH) and 450-453 (NKID). The segment at 450–453 (NKID) is G4. Residues 486–488 (SAK) are G5.

The protein belongs to the TRAFAC class translation factor GTPase superfamily. Classic translation factor GTPase family. IF-2 subfamily.

The protein localises to the cytoplasm. One of the essential components for the initiation of protein synthesis. Protects formylmethionyl-tRNA from spontaneous hydrolysis and promotes its binding to the 30S ribosomal subunits. Also involved in the hydrolysis of GTP during the formation of the 70S ribosomal complex. The protein is Translation initiation factor IF-2 of Leuconostoc citreum (strain KM20).